Consider the following 263-residue polypeptide: MNIYRKKNIIKKCFMEFFGTGLVMFFGIGCLAASKLTNANFTQFEISCIWGFGVSIAIYFSSSISGAHLNPAVTIFFWLSSKLNKRKVLPYIISQTLGSFFFTMLTYYLYNNLLISFERNNNVVRGTQESLNLASIFCVYPNYNNSFIYDFIIEIFSTALFILIVLEFNNRNSNYFLYNRSVAPILTGFLVCMINLVINPLNNISLNPARDLGPKILLSLTGWGLFSFTGGNDNILYCFIPIMGPILGANLGGWIHKTLINNS.

The Cytoplasmic segment spans residues 1–7; sequence MNIYRKK. Residues 8–36 form a helical membrane-spanning segment; it reads NIIKKCFMEFFGTGLVMFFGIGCLAASKL. Residues 37–41 are Extracellular-facing; the sequence is TNANF. Residues 42–62 form a helical membrane-spanning segment; it reads TQFEISCIWGFGVSIAIYFSS. Residues 63–65 are Cytoplasmic-facing; it reads SIS. The stretch at 66 to 69 is an intramembrane region; the sequence is GAHL. The NPA 1 motif lies at 70 to 72; it reads NPA. Residues 70–80 constitute an intramembrane region (helical); the sequence is NPAVTIFFWLS. Residues 81 to 86 are Cytoplasmic-facing; the sequence is SKLNKR. The helical transmembrane segment at 87–110 threads the bilayer; the sequence is KVLPYIISQTLGSFFFTMLTYYLY. Residues 111–145 are Extracellular-facing; it reads NNLLISFERNNNVVRGTQESLNLASIFCVYPNYNN. The helical transmembrane segment at 146-171 threads the bilayer; it reads SFIYDFIIEIFSTALFILIVLEFNNR. The Cytoplasmic segment spans residues 172–181; that stretch reads NSNYFLYNRS. A helical transmembrane segment spans residues 182 to 198; it reads VAPILTGFLVCMINLVI. Topologically, residues 199–202 are extracellular; that stretch reads NPLN. The stretch at 203–206 is an intramembrane region; sequence NISL. An NPA 2 motif is present at residues 207–209; it reads NPA. The helical intramembrane region spans 207-220; sequence NPARDLGPKILLSL. Over 221–236 the chain is Extracellular; sequence TGWGLFSFTGGNDNIL. The helical transmembrane segment at 237-259 threads the bilayer; the sequence is YCFIPIMGPILGANLGGWIHKTL. Residues 260–263 are Cytoplasmic-facing; the sequence is INNS.

The protein belongs to the MIP/aquaporin (TC 1.A.8) family.

The protein localises to the cell membrane. It catalyses the reaction glycerol(in) = glycerol(out). Mediates glycerol diffusion across the cytoplasmic membrane via a pore-type mechanism. The polypeptide is Glycerol uptake facilitator protein (glpF) (Buchnera aphidicola subsp. Acyrthosiphon pisum (strain APS) (Acyrthosiphon pisum symbiotic bacterium)).